The primary structure comprises 1364 residues: DNA-directed RNA polymerase subunit beta (1364 aa).

It belongs to the RNA polymerase beta chain family. The RNAP catalytic core consists of 2 alpha, 1 beta, 1 beta' and 1 omega subunit. When a sigma factor is associated with the core the holoenzyme is formed, which can initiate transcription.

It carries out the reaction RNA(n) + a ribonucleoside 5'-triphosphate = RNA(n+1) + diphosphate. Its function is as follows. DNA-dependent RNA polymerase catalyzes the transcription of DNA into RNA using the four ribonucleoside triphosphates as substrates. The protein is DNA-directed RNA polymerase subunit beta of Desulfatibacillum aliphaticivorans.